A 90-amino-acid chain; its full sequence is UPF0335 protein Smed_2680 (90 aa).

It belongs to the UPF0335 family.

The sequence is that of UPF0335 protein Smed_2680 from Sinorhizobium medicae (strain WSM419) (Ensifer medicae).